The primary structure comprises 176 residues: Oleosin Ara h 14.0102 (176 aa).

The residue at position 2 (Ala-2) is an N-acetylalanine; alternate. Transmembrane regions (helical) follow at residues 61 to 81 (GTLLLLSGLSLLGTIIGLAIA) and 87 to 107 (FFSPVIVPAVVTIGLAVIGIL). The disordered stretch occupies residues 156 to 176 (KTKDAGQEIQTKAQDVKRSSS).

This sequence belongs to the oleosin family. Homodimer. Forms oligomers. Expressed in seeds (at protein level). Not expressed in leaves.

It is found in the lipid droplet. It localises to the membrane. Its function is as follows. May have a structural role to stabilize the lipid body during desiccation of the seed by preventing coalescence of the oil. Probably interacts with both lipid and phospholipid moieties of lipid bodies. May also provide recognition signals for specific lipase anchorage in lipolysis during seedling growth. This is Oleosin Ara h 14.0102 from Arachis hypogaea (Peanut).